The chain runs to 814 residues: Putative E3 ubiquitin-protein ligase RF298 (814 aa).

Disordered stretches follow at residues M1–T51, S221–A301, and A411–P441. Residues S221–S231 are compositionally biased toward low complexity. The span at S289–A301 shows a compositional bias: polar residues. Positions S423 to P435 are enriched in basic and acidic residues. A coiled-coil region spans residues E506 to A710. An RING-type zinc finger spans residues C760–R800.

It belongs to the RING-type zinc finger family.

It carries out the reaction S-ubiquitinyl-[E2 ubiquitin-conjugating enzyme]-L-cysteine + [acceptor protein]-L-lysine = [E2 ubiquitin-conjugating enzyme]-L-cysteine + N(6)-ubiquitinyl-[acceptor protein]-L-lysine.. It functions in the pathway protein modification; protein ubiquitination. This is Putative E3 ubiquitin-protein ligase RF298 (RF298) from Arabidopsis thaliana (Mouse-ear cress).